Consider the following 84-residue polypeptide: Large ribosomal subunit protein bL31B (84 aa).

This sequence belongs to the bacterial ribosomal protein bL31 family. Type B subfamily. Part of the 50S ribosomal subunit.

This chain is Large ribosomal subunit protein bL31B, found in Phocaeicola vulgatus (strain ATCC 8482 / DSM 1447 / JCM 5826 / CCUG 4940 / NBRC 14291 / NCTC 11154) (Bacteroides vulgatus).